A 148-amino-acid polypeptide reads, in one-letter code: Fibroblast growth factor 1 (148 aa).

Residues 1–11 (EITTFAALTER) constitute a propeptide that is removed on maturation. Asn29 is a heparin binding site. Residues 123–139 (KKNGKTKLGSRTHFGQK) are heparin-binding.

It belongs to the heparin-binding growth factors family.

It localises to the secreted. Its subcellular location is the cytoplasm. It is found in the cell cortex. The protein localises to the cytosol. The protein resides in the nucleus. In terms of biological role, plays an important role in the regulation of cell survival, cell division, angiogenesis, cell differentiation and cell migration. Functions as a potent mitogen in vitro. Acts as a ligand for FGFR1 and integrins. Binds to FGFR1 in the presence of heparin leading to FGFR1 dimerization and activation via sequential autophosphorylation on tyrosine residues which act as docking sites for interacting proteins, leading to the activation of several signaling cascades. Binds to integrins. Its binding to integrins and subsequent ternary complex formation with integrins and FGFR1 are essential for FGF1 signaling. This Cynops pyrrhogaster (Japanese fire-bellied newt) protein is Fibroblast growth factor 1 (fgf1).